Here is a 367-residue protein sequence, read N- to C-terminus: Tubulin-like protein CetZ (367 aa).

GTP-binding positions include 11-15, Ser111, 115-117, Glu148, Asn176, and Asn194; these read QCGNR and GTG.

The protein belongs to the CetZ family.

The protein resides in the cytoplasm. Its function is as follows. Involved in cell shape control. This chain is Tubulin-like protein CetZ, found in Methanothrix thermoacetophila (strain DSM 6194 / JCM 14653 / NBRC 101360 / PT) (Methanosaeta thermophila).